We begin with the raw amino-acid sequence, 515 residues long: Cytochrome P450 monooxygenase mfmA (515 aa).

A helical membrane pass occupies residues 3–23 (KISIIPIVGVALSLAIILQLG). Cysteine 453 contacts heme.

This sequence belongs to the cytochrome P450 family. Heme is required as a cofactor.

The protein localises to the membrane. Its pathway is secondary metabolite biosynthesis; terpenoid biosynthesis. Cytochrome P450 monooxygenase; part of the gene cluster that mediates the biosynthesis of the phthalide-terpenoid hybrid 11'-O-desmethylfendlerol. Within the pathway, mfma and mfmC act together to convert 3,5-dimethylorsellinic acid (DMOA) into the phthalide 5,7-dihydroxy-4-(hydroxymethyl)-6-methylphthalide. MfmA performs especially an hydroxylation at C-9. The biosynthesis of 11'-O-desmethylfendlerol begins with the NR-PKS mfmB that forms 3,5-dimethylorsellinic acid (DMOA), which is then transformed into the phthalide 5,7-dihydroxy-4-(hydroxymethyl)-6-methylphthalide by the cytochrome P450 monooxygenase mfmA and the hydrolase mfmC. Subsequently, the methyltransferase mfmE catalyzes 7-O-methylation to yield 5-hydroxy-4-(hydroxymethyl)-7-methoxy-6-methylphthalide, which undergoes C-3 hydroxylation by the cytochrome P450 monooxygenase mfmF. The resultant cyclopolic acid (2,5-dihydroxy-4-(hydroxymethyl)-7-methoxy-6-methylphthalide) is then farnesylated by the DMATS-type prenyltransferase mfmD to afford 5-O-farnesylcyclopolic acid. Finally, the Pyr4-family terpene cyclase mfmH cyclizes the farnesyl moiety of 5-O-farnesylcyclopolic acid into a drimane-like structure, thus completing the biosynthesis of 11'-O-desmethylfendlerol. The sequence is that of Cytochrome P450 monooxygenase mfmA from Annulohypoxylon moriforme (Filamentous fungus).